A 310-amino-acid chain; its full sequence is Ribosomal RNA small subunit methyltransferase H (310 aa).

Residues 32 to 34 (GGH), Asp-52, Phe-79, Asp-100, and Gln-107 contribute to the S-adenosyl-L-methionine site.

This sequence belongs to the methyltransferase superfamily. RsmH family.

The protein resides in the cytoplasm. The enzyme catalyses cytidine(1402) in 16S rRNA + S-adenosyl-L-methionine = N(4)-methylcytidine(1402) in 16S rRNA + S-adenosyl-L-homocysteine + H(+). In terms of biological role, specifically methylates the N4 position of cytidine in position 1402 (C1402) of 16S rRNA. In Bacillus mycoides (strain KBAB4) (Bacillus weihenstephanensis), this protein is Ribosomal RNA small subunit methyltransferase H.